The sequence spans 234 residues: LexA repressor (234 aa).

The span at 1-11 (MNEATSHEGPK) shows a compositional bias: basic and acidic residues. The tract at residues 1 to 34 (MNEATSHEGPKRSLPGRPPGIRADSSGLTDRQRR) is disordered. Residues 52-72 (MREIGQAVGLSSTSSVAHQLM) constitute a DNA-binding region (H-T-H motif). Basic and acidic residues predominate over residues 83–94 (DPHRPRAYEVRG). Residues 83 to 109 (DPHRPRAYEVRGSDQSSSVQPTDTAGK) form a disordered region. Residues 95 to 105 (SDQSSSVQPTD) are compositionally biased toward polar residues. Residues serine 158 and lysine 195 each act as for autocatalytic cleavage activity in the active site.

It belongs to the peptidase S24 family. In terms of assembly, homodimer.

It catalyses the reaction Hydrolysis of Ala-|-Gly bond in repressor LexA.. In terms of biological role, represses a number of genes involved in the response to DNA damage (SOS response), including recA and lexA. In the presence of single-stranded DNA, RecA interacts with LexA causing an autocatalytic cleavage which disrupts the DNA-binding part of LexA, leading to derepression of the SOS regulon and eventually DNA repair. In Streptomyces avermitilis (strain ATCC 31267 / DSM 46492 / JCM 5070 / NBRC 14893 / NCIMB 12804 / NRRL 8165 / MA-4680), this protein is LexA repressor.